We begin with the raw amino-acid sequence, 273 residues long: Undecaprenyl-diphosphatase (273 aa).

7 consecutive transmembrane segments (helical) span residues 39 to 59 (SGLT…VVYF), 86 to 106 (LPFL…LFET), 117 to 137 (LLIG…DLFG), 146 to 166 (VTVS…IPGV), 189 to 209 (FSFL…MLHL), 220 to 240 (LPLA…VAFL), and 249 to 269 (IAPF…VILT).

This sequence belongs to the UppP family.

The protein localises to the cell inner membrane. The enzyme catalyses di-trans,octa-cis-undecaprenyl diphosphate + H2O = di-trans,octa-cis-undecaprenyl phosphate + phosphate + H(+). In terms of biological role, catalyzes the dephosphorylation of undecaprenyl diphosphate (UPP). Confers resistance to bacitracin. In Pelobacter propionicus (strain DSM 2379 / NBRC 103807 / OttBd1), this protein is Undecaprenyl-diphosphatase.